The primary structure comprises 783 residues: BMP/retinoic acid-inducible neural-specific protein 2 (783 aa).

Residues 1–33 form the signal peptide; sequence MRWQCGTRFRGLRPVVAPWTALLALGLPGWVLA. In terms of domain architecture, MACPF spans 85 to 281; sequence RYRIYREFAR…FVAAALSYIT (197 aa). N-linked (GlcNAc...) asparagine glycans are attached at residues N185, N354, N473, N579, N626, and N658.

This sequence belongs to the BRINP family.

It is found in the secreted. Inhibits neuronal cell proliferation by negative regulation of the cell cycle transition. In Pongo abelii (Sumatran orangutan), this protein is BMP/retinoic acid-inducible neural-specific protein 2 (BRINP2).